The sequence spans 181 residues: ADP-ribosylation factor 1 (181 aa).

G2 carries N-myristoyl glycine lipidation. Residues 3–16 form an important for the stable binding to the membranes region; it reads LYVSRLFNRLFQKK. GTP-binding positions include 27 to 32, 126 to 129, and A160; these read AAGKTT and NKQD.

The protein belongs to the small GTPase superfamily. Arf family. As to quaternary structure, may interact with GTPase RAB5b.

It is found in the golgi apparatus membrane. The catalysed reaction is GTP + H2O = GDP + phosphate + H(+). Alternates between an inactive GDP-bound form and an active GTP-bound form. Intrinsic GTPase activity is almost undetectable in vitro. Activated by a guanine nucleotide-exchange factor (GEF) and inactivated by GTPase-activating protein ARFGAP1. Its function is as follows. Small GTPase involved in protein trafficking between different compartments. Modulates vesicle budding and uncoating within the Golgi complex. In its GTP-bound form, triggers the recruitment of coatomer proteins to the Golgi membrane. The hydrolysis of ARF1-bound GTP, which is mediated by ARFGAPs proteins, is required for dissociation of coat proteins from Golgi membranes and vesicles. Regulates the transport of N-acylated AK2 to the parasitophorous vacuole membrane. May be involved in the activation of lipid kinase PIP5K. This is ADP-ribosylation factor 1 from Plasmodium falciparum (isolate 3D7).